Reading from the N-terminus, the 505-residue chain is Lysine--tRNA ligase (505 aa).

The Mg(2+) site is built by glutamate 403 and glutamate 410.

This sequence belongs to the class-II aminoacyl-tRNA synthetase family. As to quaternary structure, homodimer. It depends on Mg(2+) as a cofactor.

The protein localises to the cytoplasm. It catalyses the reaction tRNA(Lys) + L-lysine + ATP = L-lysyl-tRNA(Lys) + AMP + diphosphate. The chain is Lysine--tRNA ligase from Methanospirillum hungatei JF-1 (strain ATCC 27890 / DSM 864 / NBRC 100397 / JF-1).